A 93-amino-acid chain; its full sequence is Uteroglobin (93 aa).

Residues 1–17 (MKLAITIILVMLSVCYS) form the signal peptide.

The protein belongs to the secretoglobin family. In terms of assembly, antiparallel homodimer; disulfide-linked. Interaction with LMBR1L is controversial.

Its subcellular location is the secreted. In terms of biological role, binds phosphatidylcholine, phosphatidylinositol, polychlorinated biphenyls (PCB) and weakly progesterone, potent inhibitor of phospholipase A2. This chain is Uteroglobin (SCGB1A1), found in Neotomodon alstoni (Mexican volcano mouse).